The chain runs to 86 residues: Large ribosomal subunit protein bL31m (86 aa).

Residues Met1 to Ser18 constitute a mitochondrion transit peptide.

This sequence belongs to the bacterial ribosomal protein bL31 family. Highly divergent. Component of the mitochondrial large ribosomal subunit (mt-LSU). Mature yeast 74S mitochondrial ribosomes consist of a small (37S) and a large (54S) subunit. The 37S small subunit contains a 15S ribosomal RNA (15S mt-rRNA) and at least 32 different proteins. The 54S large subunit contains a 21S rRNA (21S mt-rRNA) and at least 45 different proteins.

The protein resides in the mitochondrion. Its function is as follows. Component of the mitochondrial ribosome (mitoribosome), a dedicated translation machinery responsible for the synthesis of mitochondrial genome-encoded proteins, including at least some of the essential transmembrane subunits of the mitochondrial respiratory chain. The mitoribosomes are attached to the mitochondrial inner membrane and translation products are cotranslationally integrated into the membrane. This Schizosaccharomyces pombe (strain 972 / ATCC 24843) (Fission yeast) protein is Large ribosomal subunit protein bL31m (tam9).